A 190-amino-acid chain; its full sequence is Imidazoleglycerol-phosphate dehydratase (190 aa).

The protein belongs to the imidazoleglycerol-phosphate dehydratase family.

Its subcellular location is the cytoplasm. It catalyses the reaction D-erythro-1-(imidazol-4-yl)glycerol 3-phosphate = 3-(imidazol-4-yl)-2-oxopropyl phosphate + H2O. It functions in the pathway amino-acid biosynthesis; L-histidine biosynthesis; L-histidine from 5-phospho-alpha-D-ribose 1-diphosphate: step 6/9. This chain is Imidazoleglycerol-phosphate dehydratase, found in Nitratiruptor sp. (strain SB155-2).